Consider the following 1562-residue polypeptide: E3 ubiquitin-protein ligase listerin (1562 aa).

HEAT repeat units lie at residues 41–78 (SLYS…DFNQ), 127–164 (KFLK…KDPA), 175–217 (EQLL…SAVL), 262–301 (ETVL…ITSK), 304–348 (LKVC…VSRT), 495–532 (SAIS…FLDS), 555–592 (STYQ…VALS), 813–850 (IRYA…DYNC), 908–945 (YYSR…KTVR), 997–1037 (FKSL…WLDS), 1047–1085 (TVRL…DSLS), 1188–1226 (INQS…SDVD), 1263–1298 (NSFI…KEAG), and 1299–1339 (LINR…NFSP). The RING-type zinc finger occupies 1508–1555 (CAICYSILHAVDRKLPSKTCPTCKNKFHGACLYKWFRSSGNNTCPLCR).

The protein belongs to the LTN1 family. In terms of assembly, component of the ribosome quality control complex (RQC), composed of the E3 ubiquitin ligase RKR1/LTN1, RQC1 and RQC2, as well as CDC48 and its ubiquitin-binding cofactors associated with the 60S ribosomal subunits.

Its subcellular location is the nucleus. It is found in the cytoplasm. The protein localises to the cytosol. It carries out the reaction S-ubiquitinyl-[E2 ubiquitin-conjugating enzyme]-L-cysteine + [acceptor protein]-L-lysine = [E2 ubiquitin-conjugating enzyme]-L-cysteine + N(6)-ubiquitinyl-[acceptor protein]-L-lysine.. It participates in protein modification; protein ubiquitination. E3 ubiquitin-protein ligase component of the ribosome quality control complex (RQC), a ribosome-associated complex that mediates ubiquitination and extraction of incompletely synthesized nascent chains for proteasomal degradation. Mediates ubiquitination of proteins derived from mRNAs lacking stop codons (non-stop proteins) and other translation arrest products induced by poly-lysine sequences and tandem rare codons. Ubiquitination leads to CDC48 recruitment for extraction and degradation of the incomplete translation product. May indirectly play a role in chromatin function and transcription. This Saccharomyces cerevisiae (strain ATCC 204508 / S288c) (Baker's yeast) protein is E3 ubiquitin-protein ligase listerin.